The following is a 626-amino-acid chain: MTTPSHLSDRYELGEILGFGGMSEVHLARDLRLHRDVAVKVLRADLARDPSFYLRFRREAQNAAALNHPAIVAVYDTGEAETPAGPLPYIVMEYVDGVTLRDIVHTEGPMTPKRAIEVIADACQALNFSHQNGIIHRDVKPANIMISATNAVKVMDFGIARAIADSGNSVTQTAAVIGTAQYLSPEQARGDSVDARSDVYSLGCVLYEVLTGEPPFTGDSPVSVAYQHVREDPIPPSARHEGLSADLDAVVLKALAKNPENRYQTAAEMRADLVRVHNGEPPEAPKVLTDAERTSLLSSAAGNLSGPRTDPLPRQDLDDTDRDRSIGSVGRWVAVVAVLAVLTVVVTIAINTFGGITRDVQVPDVRGQSSADAIATLQNRGFKIRTLQKPDSTIPPDHVIGTDPAANTSVSAGDEITVNVSTGPEQREIPDVSTLTYAEAVKKLTAAGFGRFKQANSPSTPELVGKVIGTNPPANQTSAITNVVIIIVGSGPATKDIPDVAGQTVDVAQKNLNVYGFTKFSQASVDSPRPAGEVTGTNPPAGTTVPVDSVIELQVSKGNQFVMPDLSGMFWVDAEPRLRALGWTGMLDKGADVDAGGSQHNRVVYQNPPAGTGVNRDGIITLRFGQ.

Residues 1-332 lie on the Cytoplasmic side of the membrane; the sequence is MTTPSHLSDR…DRSIGSVGRW (332 aa). In terms of domain architecture, Protein kinase spans 11–274; the sequence is YELGEILGFG…TAAEMRADLV (264 aa). Residues 17–25, Lys40, and 93–95 contribute to the ATP site; these read LGFGGMSEV and EYV. Asp138 (proton acceptor) is an active-site residue. Residues 140 to 143 and Asp156 each bind ATP; that span reads KPAN. Asn143 and Asp156 together coordinate Mg(2+). Phosphoserine; by autocatalysis is present on residues Ser166 and Ser169. 3 positions are modified to phosphothreonine; by autocatalysis: Thr171, Thr173, and Thr294. A Phosphoserine; by autocatalysis modification is found at Ser295. Residues 299 to 323 are disordered; that stretch reads SAAGNLSGPRTDPLPRQDLDDTDRD. Residue Thr309 is modified to Phosphothreonine; by autocatalysis. Positions 311–323 are enriched in basic and acidic residues; sequence PLPRQDLDDTDRD. A helical transmembrane segment spans residues 333 to 353; it reads VAVVAVLAVLTVVVTIAINTF. The Extracellular portion of the chain corresponds to 354–626; the sequence is GGITRDVQVP…DGIITLRFGQ (273 aa). 4 PASTA domains span residues 356-422, 423-490, 491-557, and 558-626; these read ITRD…NVST, GPEQ…IVGS, GPAT…QVSK, and GNQF…RFGQ.

It belongs to the protein kinase superfamily. Ser/Thr protein kinase family. Homodimer. Autophosphorylated. Dephosphorylated by PstP.

It is found in the cell membrane. It carries out the reaction L-seryl-[protein] + ATP = O-phospho-L-seryl-[protein] + ADP + H(+). It catalyses the reaction L-threonyl-[protein] + ATP = O-phospho-L-threonyl-[protein] + ADP + H(+). Protein kinase that regulates many aspects of mycobacterial physiology. Is a key component of a signal transduction pathway that regulates cell growth, cell shape and cell division via phosphorylation of target proteins. The polypeptide is Serine/threonine-protein kinase PknB (pknB) (Mycobacterium bovis (strain ATCC BAA-935 / AF2122/97)).